Consider the following 472-residue polypeptide: Ribulose bisphosphate carboxylase large chain (472 aa).

Substrate is bound by residues asparagine 120 and threonine 170. Lysine 172 functions as the Proton acceptor in the catalytic mechanism. Lysine 174 is a substrate binding site. Positions 198, 200, and 201 each coordinate Mg(2+). Lysine 198 bears the N6-carboxylysine mark. The active-site Proton acceptor is histidine 291. The substrate site is built by arginine 292, histidine 324, and serine 376.

The protein belongs to the RuBisCO large chain family. Type I subfamily. In terms of assembly, heterohexadecamer of 8 large chains and 8 small chains. Mg(2+) serves as cofactor.

The protein localises to the carboxysome. It catalyses the reaction 2 (2R)-3-phosphoglycerate + 2 H(+) = D-ribulose 1,5-bisphosphate + CO2 + H2O. The catalysed reaction is D-ribulose 1,5-bisphosphate + O2 = 2-phosphoglycolate + (2R)-3-phosphoglycerate + 2 H(+). Functionally, ruBisCO catalyzes two reactions: the carboxylation of D-ribulose 1,5-bisphosphate, the primary event in carbon dioxide fixation, as well as the oxidative fragmentation of the pentose substrate in the photorespiration process. Both reactions occur simultaneously and in competition at the same active site. This chain is Ribulose bisphosphate carboxylase large chain, found in Gloeothece citriformis (strain PCC 7424) (Cyanothece sp. (strain PCC 7424)).